We begin with the raw amino-acid sequence, 191 residues long: Ribonuclease HII (191 aa).

In terms of domain architecture, RNase H type-2 spans 16–191; sequence INLIGIDEAG…KLHRKSFKLL (176 aa). Asp22, Glu23, and Asp110 together coordinate a divalent metal cation.

Belongs to the RNase HII family. Mn(2+) is required as a cofactor. The cofactor is Mg(2+).

The protein resides in the cytoplasm. It catalyses the reaction Endonucleolytic cleavage to 5'-phosphomonoester.. Functionally, endonuclease that specifically degrades the RNA of RNA-DNA hybrids. The chain is Ribonuclease HII from Campylobacter jejuni subsp. jejuni serotype O:6 (strain 81116 / NCTC 11828).